The primary structure comprises 147 residues: Large ribosomal subunit protein bL9 (147 aa).

This sequence belongs to the bacterial ribosomal protein bL9 family.

Functionally, binds to the 23S rRNA. In Bacteroides thetaiotaomicron (strain ATCC 29148 / DSM 2079 / JCM 5827 / CCUG 10774 / NCTC 10582 / VPI-5482 / E50), this protein is Large ribosomal subunit protein bL9.